We begin with the raw amino-acid sequence, 567 residues long: R-linalool synthase QH1, chloroplastic (567 aa).

Residues Gly-1–Ala-24 constitute a chloroplast transit peptide. (2E)-geranyl diphosphate is bound by residues Arg-282, Asp-319, Asp-323, Arg-460, and Asp-463. Mg(2+) contacts are provided by Asp-319 and Asp-323. The short motif at Asp-319–Asp-323 is the DDXXD motif element. 3 residues coordinate Mg(2+): Asp-463, Thr-467, and Glu-471.

Belongs to the terpene synthase family. Tpsb subfamily. Requires Mg(2+) as cofactor. In terms of tissue distribution, highly expressed in leaves and lower levels in inflorescences. Not detected in stems, stem epidermis, stem stele or roots.

Its subcellular location is the plastid. The protein localises to the chloroplast. The catalysed reaction is (2E)-geranyl diphosphate + H2O = (R)-linalool + diphosphate. The protein operates within secondary metabolite biosynthesis; terpenoid biosynthesis. Its function is as follows. Monoterpene synthase that catalyzes the formation of (3R)-linalool from geranyl diphosphate, but not from isopentenyl diphosphate, dimethylallyl diphosphate, chrysanthemyl diphosphate, farnesyl diphosphate, (+)-copalyl diphosphate or geranylgeranyl diphosphate. In Artemisia annua (Sweet wormwood), this protein is R-linalool synthase QH1, chloroplastic (QH1).